The chain runs to 314 residues: Vacuolar membrane protein EC1118_1N9_3125g (314 aa).

Residues 32-60 (KPTSSVVSETSSKSLPSLTSSAFSTSSGA) are disordered. A helical transmembrane segment spans residues 93-113 (VYIAVGAVIGAIFISILIWWL). Phosphoserine is present on residues Ser148, Ser254, and Ser274. A disordered region spans residues 240–309 (EERKLNLNRP…PSMFLDDVLN (70 aa)). A compositionally biased stretch (basic and acidic residues) spans 254–269 (SPERKEKKINSMEGYH).

Belongs to the PRM5 family.

Its subcellular location is the vacuole membrane. In Saccharomyces cerevisiae (strain Lalvin EC1118 / Prise de mousse) (Baker's yeast), this protein is Vacuolar membrane protein EC1118_1N9_3125g.